The sequence spans 385 residues: 8-amino-7-oxononanoate synthase (385 aa).

A substrate-binding site is contributed by R23. 110–111 (GF) is a binding site for pyridoxal 5'-phosphate. H135 serves as a coordination point for substrate. Pyridoxal 5'-phosphate-binding residues include S180, H208, and T234. The residue at position 237 (K237) is an N6-(pyridoxal phosphate)lysine. A substrate-binding site is contributed by T350.

It belongs to the class-II pyridoxal-phosphate-dependent aminotransferase family. BioF subfamily. In terms of assembly, homodimer. Pyridoxal 5'-phosphate serves as cofactor.

It carries out the reaction 6-carboxyhexanoyl-[ACP] + L-alanine + H(+) = (8S)-8-amino-7-oxononanoate + holo-[ACP] + CO2. The protein operates within cofactor biosynthesis; biotin biosynthesis. Catalyzes the decarboxylative condensation of pimeloyl-[acyl-carrier protein] and L-alanine to produce 8-amino-7-oxononanoate (AON), [acyl-carrier protein], and carbon dioxide. This Vibrio vulnificus (strain CMCP6) protein is 8-amino-7-oxononanoate synthase.